The primary structure comprises 758 residues: Protein hunchback (758 aa).

2 disordered regions span residues 30-51 (EPGHHLDGNSVASSPRQSPIPS) and 172-214 (EKLQ…EDMK). Residues 39-51 (SVASSPRQSPIPS) show a composition bias toward polar residues. Thr178 bears the Phosphothreonine mark. Phosphoserine is present on residues Ser188, Ser207, Ser209, and Ser210. A compositionally biased stretch (basic and acidic residues) spans 198–214 (EPEKEHDQMSNSSEDMK). C2H2-type zinc fingers lie at residues 240–262 (YKCKTCGVVAITKVDFWAHTRTH), 269–291 (LQCPKCPFVTEFKHHLEYHIRKH), 297–319 (FQCDKCSYTCVNKSMLNSHRKSH), and 325–349 (YRCADCDYATKYCHSFKLHLRKYGH). Disordered regions lie at residues 365 to 416 (LVID…PVAT) and 513 to 536 (QLQQQNQQQSDNEEEEQDDEYERK). 2 stretches are compositionally biased toward low complexity: residues 398–415 (VAAVAPQQQQSQPAQPVA) and 513–522 (QLQQQNQQQS). Over residues 523-532 (DNEEEEQDDE) the composition is skewed to acidic residues. Ser537 and Ser540 each carry phosphoserine. The tract at residues 603–695 (MTSPEQLKVP…TTSAVAAPPS (93 aa)) is disordered. Low complexity predominate over residues 652 to 695 (ANTSASSTASSSGNSSNASSNSNGNSSSNSSSNGTTSAVAAPPS). 2 consecutive C2H2-type zinc fingers follow at residues 705 to 727 (YECKYCDIFFKDAVLYTIHMGYH) and 733 to 757 (FKCNMCGEKCDGPVGLFVHMARNAH).

The protein belongs to the hunchback C2H2-type zinc-finger protein family. As to expression, in embryo, expression of maternal transcript is highest in anterior region. Zygotic transcript is expressed in anterior region until the beginning of gastrulation and in posterior region until early gastrulation. After this, it is expressed in developing nervous system.

The protein localises to the nucleus. In terms of biological role, gap class segmentation protein that controls development of head structures. This chain is Protein hunchback, found in Drosophila melanogaster (Fruit fly).